Reading from the N-terminus, the 473-residue chain is 6-phospho-beta-glucosidase (473 aa).

Residue E174 is the Proton donor of the active site. Catalysis depends on E366, which acts as the Nucleophile.

It belongs to the glycosyl hydrolase 1 family.

It carries out the reaction 6-phospho-beta-D-glucosyl-(1-&gt;4)-D-glucose + H2O = D-glucose 6-phosphate + D-glucose. The sequence is that of 6-phospho-beta-glucosidase (abgA) from Clostridium longisporum.